A 280-amino-acid polypeptide reads, in one-letter code: Lipase chaperone (280 aa).

A helical membrane pass occupies residues 5–22; the sequence is ALTIITIALGSLGAVYFL.

The protein belongs to the lipase chaperone family.

It localises to the cell inner membrane. May be involved in the folding of the extracellular lipase during its passage through the periplasm. This chain is Lipase chaperone (lifO), found in Vibrio vulnificus (strain CMCP6).